The sequence spans 385 residues: Serine/threonine-protein kinase 52 (385 aa).

The Protein kinase domain maps to 82-356 (LIIKTVLARG…PEMDEVVPML (275 aa)). ATP is bound by residues 88–96 (LARGTFGTV) and K109. The active-site Proton acceptor is D227.

This sequence belongs to the protein kinase superfamily. Ser/Thr protein kinase family. Binds to CBC1. Associates with PHOT1, PHOT2, BLUS1 and PM H(+)-ATPase (e.g. AHA1). Post-translationally, autophosphorylated. Phosphorylated by HT1 in response to low CO(2) concentrations. In terms of tissue distribution, expressed in guard cells.

The protein resides in the cytoplasm. The protein localises to the cytosol. The catalysed reaction is L-seryl-[protein] + ATP = O-phospho-L-seryl-[protein] + ADP + H(+). It catalyses the reaction L-threonyl-[protein] + ATP = O-phospho-L-threonyl-[protein] + ADP + H(+). Its function is as follows. Serine/threonine protein kinase that phosphorylates proteins on serine and threonine residues. Collectively with CBC1, acts as a negative regulator of stomatal opening, probably via the inhibition of plasma membrane-type ATPases (AHA1 and AHA2) activity in guard cells, but in an abscisic acid (ABA)-independent manner. However, at low concentrations of CO(2), together with CBC1, stimulates stomatal opening via the inhibition of S-type anion channels in response to blue light (BL) and red light (RL), thus being a key component to maximize photosynthesis in the light under low CO(2) conditions. Required for temperature decrease in leaves. Downstream target of HIGH LEAF TEMPERATURE1 (HT1) during low CO(2)-induced stomatal opening. In Arabidopsis thaliana (Mouse-ear cress), this protein is Serine/threonine-protein kinase 52.